Reading from the N-terminus, the 202-residue chain is 7-cyano-7-deazaguanine synthase 1 (202 aa).

ATP is bound at residue 7 to 17 (MSGGLDSSSAA). Cys166, Cys174, Cys177, and Cys180 together coordinate Zn(2+).

This sequence belongs to the QueC family. Requires Zn(2+) as cofactor.

The catalysed reaction is 7-carboxy-7-deazaguanine + NH4(+) + ATP = 7-cyano-7-deazaguanine + ADP + phosphate + H2O + H(+). It functions in the pathway purine metabolism; 7-cyano-7-deazaguanine biosynthesis. Its function is as follows. Catalyzes the ATP-dependent conversion of 7-carboxy-7-deazaguanine (CDG) to 7-cyano-7-deazaguanine (preQ(0)). This is 7-cyano-7-deazaguanine synthase 1 (queC1) from Sulfurisphaera tokodaii (strain DSM 16993 / JCM 10545 / NBRC 100140 / 7) (Sulfolobus tokodaii).